Here is a 319-residue protein sequence, read N- to C-terminus: Taste receptor type 2 member 30 (319 aa).

Residue Met-1 is a topological domain, extracellular. The chain crosses the membrane as a helical span at residues 2 to 22 (ITFLPIIFSILIVVIFVIGNF). The Cytoplasmic segment spans residues 23-46 (ANGFIALVNSIEWVKRQKISFVDQ). A helical transmembrane segment spans residues 47–67 (ILTALAVSRVGLLWVLLLHWY). The Extracellular segment spans residues 68–86 (ATQLNPAFYSVEVRITAYN). Residues 87–107 (VWAVTNHFSSWLATSLSMFYL) form a helical membrane-spanning segment. The Cytoplasmic segment spans residues 108–126 (LRIANFSNLIFLRIKRRVK). A helical membrane pass occupies residues 127 to 147 (SVVLVILLGPLLFLVCHLFVI). Topologically, residues 148 to 178 (NMDETVWTKEYEGNVTWKIKLRSAMYHSNMT) are extracellular. N-linked (GlcNAc...) asparagine glycans are attached at residues Asn-161 and Asn-176. The chain crosses the membrane as a helical span at residues 179-199 (LTMLANFVPLTLTLISFLLLI). Topologically, residues 200–229 (CSLCKHLKKMQLHGKGSQDPSTKVHIKALQ) are cytoplasmic. A helical transmembrane segment spans residues 230–250 (TVTSFLLLCAIYFLSMIISVC). The Extracellular portion of the chain corresponds to 251–259 (NFGRLEKQP). The chain crosses the membrane as a helical span at residues 260–280 (VFMFCQAIIFSYPSTHPFILI). Over 281–319 (LGNKKLKQIFLSVLRHVRYWVKDRSLRLHRFTRGALCVF) the chain is Cytoplasmic.

The protein belongs to the G-protein coupled receptor T2R family. Expressed in subsets of taste receptor cells of the tongue and exclusively in gustducin-positive cells.

Its subcellular location is the membrane. In terms of biological role, receptor that may play a role in the perception of bitterness and is gustducin-linked. May play a role in sensing the chemical composition of the gastrointestinal content. The activity of this receptor may stimulate alpha gustducin, mediate PLC-beta-2 activation and lead to the gating of TRPM5. The sequence is that of Taste receptor type 2 member 30 (TAS2R30) from Homo sapiens (Human).